Here is a 100-residue protein sequence, read N- to C-terminus: Large ribosomal subunit protein uL23 (100 aa).

It belongs to the universal ribosomal protein uL23 family. In terms of assembly, part of the 50S ribosomal subunit. Contacts protein L29, and trigger factor when it is bound to the ribosome.

Functionally, one of the early assembly proteins it binds 23S rRNA. One of the proteins that surrounds the polypeptide exit tunnel on the outside of the ribosome. Forms the main docking site for trigger factor binding to the ribosome. This is Large ribosomal subunit protein uL23 from Thermotoga neapolitana (strain ATCC 49049 / DSM 4359 / NBRC 107923 / NS-E).